A 352-amino-acid polypeptide reads, in one-letter code: Protein RecA (352 aa).

65–72 (GPESSGKT) is an ATP binding site. The segment at 332–352 (EEVEKADVKKDAKKDAAEALK) is disordered. The span at 333–352 (EVEKADVKKDAKKDAAEALK) shows a compositional bias: basic and acidic residues.

It belongs to the RecA family.

The protein resides in the cytoplasm. Functionally, can catalyze the hydrolysis of ATP in the presence of single-stranded DNA, the ATP-dependent uptake of single-stranded DNA by duplex DNA, and the ATP-dependent hybridization of homologous single-stranded DNAs. It interacts with LexA causing its activation and leading to its autocatalytic cleavage. This chain is Protein RecA, found in Photobacterium profundum (strain SS9).